The primary structure comprises 361 residues: Phenylalanine--tRNA ligase alpha subunit (361 aa).

Position 260 (glutamate 260) interacts with Mg(2+).

The protein belongs to the class-II aminoacyl-tRNA synthetase family. Phe-tRNA synthetase alpha subunit type 1 subfamily. As to quaternary structure, tetramer of two alpha and two beta subunits. Mg(2+) serves as cofactor.

The protein localises to the cytoplasm. It carries out the reaction tRNA(Phe) + L-phenylalanine + ATP = L-phenylalanyl-tRNA(Phe) + AMP + diphosphate + H(+). This chain is Phenylalanine--tRNA ligase alpha subunit, found in Chelativorans sp. (strain BNC1).